A 787-amino-acid polypeptide reads, in one-letter code: Phenylalanine--tRNA ligase beta subunit (787 aa).

In terms of domain architecture, tRNA-binding spans 39-149 (APAFAGVVIA…EDAPVGTNIR (111 aa)). The B5 domain maps to 400–475 (PEAKQVGLRL…RVYGYENIPD (76 aa)). The Mg(2+) site is built by Asp-453, Asp-459, Glu-462, and Glu-463. Residues 694–786 (SKFQPVRRDL…AATAAGARLR (93 aa)) enclose the FDX-ACB domain.

The protein belongs to the phenylalanyl-tRNA synthetase beta subunit family. Type 1 subfamily. As to quaternary structure, tetramer of two alpha and two beta subunits. Mg(2+) is required as a cofactor.

The protein localises to the cytoplasm. It catalyses the reaction tRNA(Phe) + L-phenylalanine + ATP = L-phenylalanyl-tRNA(Phe) + AMP + diphosphate + H(+). The chain is Phenylalanine--tRNA ligase beta subunit (pheT) from Neisseria meningitidis serogroup B (strain ATCC BAA-335 / MC58).